We begin with the raw amino-acid sequence, 139 residues long: MDHDKLEANLLDHALTKYLKSTKQLDEATVPKHVNNVRGFILRIIYRHGSCTIKDILKEVTLSPSATTTALNHLEQEGFIERSRNNNDRRTVWITLSESGRGAAEQMIENRQQLIDGMFERLTAEEKKTFLAIIAKLAQ.

The HTH marR-type domain maps to 8-139 (ANLLDHALTK…FLAIIAKLAQ (132 aa)). The segment at residues 53-76 (IKDILKEVTLSPSATTTALNHLEQ) is a DNA-binding region (H-T-H motif).

This is an uncharacterized protein from Bacillus subtilis (strain 168).